Reading from the N-terminus, the 254-residue chain is Mannose-binding protein (254 aa).

The N-terminal stretch at 1–19 is a signal peptide; the sequence is MTLLQPFSALLLCLSLMMA. The segment at 46–99 is disordered; it reads NGLPGRDGRDGPKGEKGDPGEGLRGLQGLPGKAGPQGLKGEVGPQGEKGQKGER. Residues 51-66 show a composition bias toward basic and acidic residues; sequence RDGRDGPKGEKGDPGE. The residue at position 57 (Pro57) is a 4-hydroxyproline. Lys58 and Lys61 each carry 5-hydroxylysine. Lys58 and Lys61 each carry an O-linked (Gal...) hydroxylysine glycan. Pro75 bears the 4-hydroxyproline mark. 2 positions are modified to 5-hydroxylysine: Lys93 and Lys96. One can recognise a C-type lectin domain in the interval 140–250; it reads VGKKMFVSTG…LDCSNSNIFI (111 aa). Cystine bridges form between Cys161–Cys252 and Cys229–Cys243.

In terms of assembly, oligomeric complex of 3 or more homotrimers.

Its subcellular location is the secreted. Functionally, calcium-dependent lectin involved in innate immune defense. Binds mannose, fucose and N-acetylglucosamine on different microorganisms and activates the lectin complement pathway. This chain is Mannose-binding protein, found in Gallus gallus (Chicken).